A 187-amino-acid chain; its full sequence is Pyridoxal 5'-phosphate synthase subunit PdxT (187 aa).

47–49 (GES) is an L-glutamine binding site. The active-site Nucleophile is the cysteine 76. L-glutamine-binding positions include arginine 102 and 128–129 (IR). Active-site charge relay system residues include histidine 165 and glutamate 167.

The protein belongs to the glutaminase PdxT/SNO family. As to quaternary structure, in the presence of PdxS, forms a dodecamer of heterodimers. Only shows activity in the heterodimer.

The catalysed reaction is aldehydo-D-ribose 5-phosphate + D-glyceraldehyde 3-phosphate + L-glutamine = pyridoxal 5'-phosphate + L-glutamate + phosphate + 3 H2O + H(+). It carries out the reaction L-glutamine + H2O = L-glutamate + NH4(+). It functions in the pathway cofactor biosynthesis; pyridoxal 5'-phosphate biosynthesis. In terms of biological role, catalyzes the hydrolysis of glutamine to glutamate and ammonia as part of the biosynthesis of pyridoxal 5'-phosphate. The resulting ammonia molecule is channeled to the active site of PdxS. The polypeptide is Pyridoxal 5'-phosphate synthase subunit PdxT (Methanococcus maripaludis (strain C5 / ATCC BAA-1333)).